The sequence spans 207 residues: MLNKLSLLLKDAGIPLTDHQKNQLIAYVNMLHKWNKAYNLTSVRDPNEMLVRHILDSIVVAPYLQGERFIDVGTGPGLPGIPLSIVRPEAHFTLLDSLGKRVRFLRQVQHELKLENIEPVQSRVEEFPSEPPFDGVISRAFASLNDMVSWCHHLPGEQGRFYALKGQMPEDEIALLHEEYQVESVVKLQVPALDGERHLVVIKANKI.

S-adenosyl-L-methionine is bound by residues glycine 73, leucine 78, 124 to 125 (VE), and arginine 139.

The protein belongs to the methyltransferase superfamily. RNA methyltransferase RsmG family.

The protein resides in the cytoplasm. It carries out the reaction guanosine(527) in 16S rRNA + S-adenosyl-L-methionine = N(7)-methylguanosine(527) in 16S rRNA + S-adenosyl-L-homocysteine. Specifically methylates the N7 position of guanine in position 527 of 16S rRNA. The chain is Ribosomal RNA small subunit methyltransferase G from Shigella dysenteriae serotype 1 (strain Sd197).